We begin with the raw amino-acid sequence, 422 residues long: Pre-B-cell leukemia transcription factor 2 (422 aa).

Positions 1–43 (MDEQGRLMQARGVGIPGHPIHGGPQTLTPHPMHEPPADNGEPR) are disordered. The segment covering 31–43 (PMHEPPADNGEPR) has biased composition (basic and acidic residues). Residues 42–236 (PRKQDIGDIL…VMILRSRFLD (195 aa)) form the PBC domain. Residues 49–128 (DILQQIMTIT…EGVAGPEKGG (80 aa)) form a PBC-A region. The tract at residues 131–236 (AAAAAAAAAS…VMILRSRFLD (106 aa)) is PBC-B. The homeobox DNA-binding region spans 237–299 (ARRKRRNFSK…NKRIRYKKNI (63 aa)). Disordered regions lie at residues 319–341 (QGGH…GSFN) and 353–422 (QGLN…DTSN). Over residues 401 to 410 (VTPSSVTSPT) the composition is skewed to polar residues.

It belongs to the TALE/PBX homeobox family.

Its subcellular location is the nucleus. Functionally, transcriptional activator that binds the sequence 5'-ATCAATCAA-3'. In Xenopus tropicalis (Western clawed frog), this protein is Pre-B-cell leukemia transcription factor 2.